We begin with the raw amino-acid sequence, 170 residues long: Acetolactate synthase small subunit (170 aa).

One can recognise an ACT domain in the interval 9-83 (TLSVLVEDKP…NVIKIVEQEE (75 aa)). Residue K46 forms an Isoglutamyl lysine isopeptide (Lys-Gln) (interchain with Q-Cter in protein Pup) linkage.

The protein belongs to the acetolactate synthase small subunit family. In terms of assembly, dimer of large and small chains.

It catalyses the reaction 2 pyruvate + H(+) = (2S)-2-acetolactate + CO2. Its pathway is amino-acid biosynthesis; L-isoleucine biosynthesis; L-isoleucine from 2-oxobutanoate: step 1/4. The protein operates within amino-acid biosynthesis; L-valine biosynthesis; L-valine from pyruvate: step 1/4. In Mycolicibacterium smegmatis (strain ATCC 700084 / mc(2)155) (Mycobacterium smegmatis), this protein is Acetolactate synthase small subunit (ilvH).